The chain runs to 325 residues: UPF0285 protein Mbar_A0208 (325 aa).

Belongs to the UPF0285 family.

The polypeptide is UPF0285 protein Mbar_A0208 (Methanosarcina barkeri (strain Fusaro / DSM 804)).